The following is a 330-amino-acid chain: Serine/threonine-protein phosphatase PP1-alpha catalytic subunit (330 aa).

At Ser-2 the chain carries N-acetylserine. 2 positions are modified to phosphoserine: Ser-2 and Ser-22. Asp-64, His-66, Asp-92, and Asn-124 together coordinate Mn(2+). His-125 acts as the Proton donor in catalysis. The Mn(2+) site is built by His-173 and His-248. Lys-305 carries the N6-acetyllysine modification. Position 306 is a phosphotyrosine (Tyr-306). The interval Tyr-306–Lys-330 is disordered. Thr-320 is subject to Phosphothreonine. A Phosphoserine modification is found at Ser-325.

This sequence belongs to the PPP phosphatase family. PP-1 subfamily. As to quaternary structure, PP1 comprises a catalytic subunit, PPP1CA, PPP1CB or PPP1CC, which is folded into its native form by inhibitor 2 and glycogen synthetase kinase 3, and then complexed to one or several targeting or regulatory subunits. PPP1R12A, PPP1R12B and PPP1R12C mediate binding to myosin. PPP1R3A (in skeletal muscle), PPP1R3B (in liver), PPP1R3C, PPP1R3D and PPP1R3F (in brain) mediate binding to glycogen. Interacts with PPP1R15A and PPP1R15B; the interactions mediate binding to EIF2S1. Part of a complex containing PPP1R15B, PP1 and NCK1/2. Interacts with PPP1R9A, PPP1R9B and PPP1R7. Interacts with YLPM1. Forms a complex with ILF2, ILF3, YLPM1, KHDRBS1, RBMX and NCOA5. Interacts with NOM1 and PPP1R8. Interacts with PPP1R16B. Interacts with RPSA only in the presence of PPP1R16B. Component of the PNUTS-PP1 phosphatase complex, composed of PPP1R10/PNUTS, TOX4, WDR82, and PPP1CA or PPP1CB or PPP1CC. Interacts with PPP1R10/PNUTS and PPP1R8. Interacts with WDR82 in the presence of PPP1R10/PNUTS. Interacts with PPP1R39. transition from mitosis into interphase. Interacts with TRIM28; the interaction dephosphorylates TRIM28 on 'Ser-824' and forms a complex at the p21 promoter site. Interacts with NEK2. Interacts with PHACTR4; which acts as an activator of PP1 activity. Interacts with FER; this promotes phosphorylation at Thr-320. Interacts with BTBD10. Interacts with KCTD20. Interacts with FOXP3. Interacts with CENPA. Interacts with ATG16L1. Found in a complex with PPP1CA, PPP1CC, SHC1 and PEAK1. Interacts with tensin TNS1. Interacts with SAXO4, PPP1R21, PPP1R26, PPP1R27, PPP1R35, PPP1R36, PPP1R37, SH3RF2, ELFN1 and ELFN2. Interacts with TPRN; the interaction results in inhibition of PPC1A phosphatase activity. Interacts with SKA1 (via C-terminus); the interaction is direct and required for the recruitment of PP1 to the kinetochore. Interacts with the KNL1 complex subunit KNL1; the interaction is direct and mutually exclusive with KNL1 binding to microtubules. Component of the SHOC2-MRAS-PP1c (SMP) complex consisting of SHOC2, GTP-bound M-Ras/MRAS and the catalytic subunit of protein phosphatase 1 (either PPP1CA, PPP1CB or PPP1CC). SHOC2 and PP1c preferably bind M-Ras/MRAS, but they also bind K-Ras/KRAS, N-Ras/NRAS and H-Ras/HRAS; these interactions are GTP-dependent and both SHOC2 and PP1c are required to form a stable complex. Interacts with SHOC2 in the absence of Ras GTPases. It depends on Mn(2+) as a cofactor. Phosphorylated. Dephosphorylated at Thr-320 in the presence of ionizing radiation.

Its subcellular location is the cytoplasm. It is found in the nucleus. The protein resides in the nucleoplasm. It localises to the nucleolus. It catalyses the reaction O-phospho-L-seryl-[protein] + H2O = L-seryl-[protein] + phosphate. The enzyme catalyses O-phospho-L-threonyl-[protein] + H2O = L-threonyl-[protein] + phosphate. Protein phosphatase that associates with over 200 regulatory proteins to form highly specific holoenzymes which dephosphorylate hundreds of biological targets. Protein phosphatase 1 (PP1) is essential for cell division, transcription elongation, and participates in the regulation of glycogen metabolism, muscle contractility and protein synthesis. Involved in regulation of ionic conductances and long-term synaptic plasticity. May play an important role in dephosphorylating substrates such as the postsynaptic density-associated Ca(2+)/calmodulin dependent protein kinase II. Catalytic component of the PNUTS-PP1 protein phosphatase complex, a protein phosphatase 1 (PP1) complex that promotes RNA polymerase II transcription pause-release, allowing transcription elongation: the PNUTS-PP1 complex mediates the release of RNA polymerase II from promoter-proximal region of genes by catalyzing dephosphorylation of proteins involved in transcription, such as AFF4, CDK9, MEPCE, INTS12, NCBP1, POLR2M/GDOWN1 and SUPT6H. The PNUTS-PP1 complex also regulates transcription termination by mediating dephosphorylation of SUPT5H in termination zones downstream of poly(A) sites, thereby promoting deceleration of RNA polymerase II transcription. PNUTS-PP1 complex is also involved in the response to replication stress by mediating dephosphorylation of POLR2A at 'Ser-5' of the CTD, promoting RNA polymerase II degradation. PNUTS-PP1 also plays a role in the control of chromatin structure and cell cycle progression during the transition from mitosis into interphase. Regulates NEK2 function in terms of kinase activity and centrosome number and splitting, both in the presence and absence of radiation-induced DNA damage. Regulator of neural tube and optic fissure closure, and enteric neural crest cell (ENCCs) migration during development. In balance with CSNK1D and CSNK1E, determines the circadian period length, through the regulation of the speed and rhythmicity of PER1 and PER2 phosphorylation. May dephosphorylate CSNK1D and CSNK1E. Dephosphorylates the 'Ser-418' residue of FOXP3 in regulatory T-cells (Treg) from patients with rheumatoid arthritis, thereby inactivating FOXP3 and rendering Treg cells functionally defective. Dephosphorylates CENPA. Dephosphorylates the 'Ser-139' residue of ATG16L1 causing dissociation of ATG12-ATG5-ATG16L1 complex, thereby inhibiting autophagy. Together with PPP1CC (PP1-gamma subunit), dephosphorylates IFIH1/MDA5 and RIG-I leading to their activation and a functional innate immune response. Core component of the SHOC2-MRAS-PP1c (SMP) holophosphatase complex that regulates the MAPK pathway activation. The SMP complex specifically dephosphorylates the inhibitory phosphorylation at 'Ser-259' of RAF1 kinase, 'Ser-365' of BRAF kinase and 'Ser-214' of ARAF kinase, stimulating their kinase activities. The SMP complex enhances the dephosphorylation activity and substrate specificity of PP1c. The chain is Serine/threonine-protein phosphatase PP1-alpha catalytic subunit (PPP1CA) from Canis lupus familiaris (Dog).